A 682-amino-acid chain; its full sequence is E3 ubiquitin ligase Rnf157 (682 aa).

Residue G2 is the site of N-myristoyl glycine attachment. The RING-type; degenerate zinc-finger motif lies at 277–317; that stretch reads CVVCLSDVRDTLILPCRHCASCNVHCADTLRYQANNCPICR. The short motif at 330–333 is the D-box 1 element; that stretch reads RKKL. Disordered regions lie at residues 440–604 and 655–682; these read QNSS…VQED and NTQR…PLAV. Polar residues predominate over residues 479–538; it reads ESENLTLSSSGAVDQSSCTGTPLSSTISSPEDPASSSLAQSVMSMASSQISTDTVSSMSG. Residues 585–597 show a composition bias toward acidic residues; the sequence is QDAEGNDIMEEED. The short motif at 658 to 661 is the D-box 2 element; that stretch reads RRRL. Residues S662, S664, and S665 each carry the phosphoserine modification.

In terms of assembly, interacts with APBB1. Interacts with CHD1; CHD1-binding controls RNF157 stability. Also interacts with ATRN, MEGF8, TECR, MSI2, PLRG1, BYSL, MTERF3, PSMA1, MRPS18B, PRPF4, FASTKD2, SLC25A1, SMU1, CNOT9, MRPS2, MAGT1, FXR2, EMD, PSMD8, HDAC1, RAN, HSD17B12, TXNDC5 and MRPL19. In terms of tissue distribution, predominantly expressed in the brain.

It localises to the cytoplasm. It catalyses the reaction S-ubiquitinyl-[E2 ubiquitin-conjugating enzyme]-L-cysteine + [acceptor protein]-L-lysine = [E2 ubiquitin-conjugating enzyme]-L-cysteine + N(6)-ubiquitinyl-[acceptor protein]-L-lysine.. E3 ubiquitin ligase that ubiquitinates APBB1 for its degradation by the proteasome and thus prevents apoptosis and promotes survival of neurons. Has a dual role in neurons as it is also required for dendrite growth and maintenance for which its ligase activity is not critical. May act as a scaffold molecule to regulate this process. Acts as a downstream effector of the interconnected PI3K and MAPK signaling pathways and thus participates in the regulation of the cell cycle. The chain is E3 ubiquitin ligase Rnf157 (Rnf157) from Rattus norvegicus (Rat).